Here is a 760-residue protein sequence, read N- to C-terminus: MOXD1 homolog 2 (760 aa).

The segment at 1–34 is disordered; sequence MAHPRKAVATPATLQLGPPAQTAQSPAATLRHSR. Residues 18-34 are compositionally biased toward low complexity; it reads PPAQTAQSPAATLRHSR. The helical transmembrane segment at 47–67 threads the bilayer; sequence CFISCHTFNLFLLLLLLASGV. Residues N78, N198, and N223 are each glycosylated (N-linked (GlcNAc...) asparagine). The 117-residue stretch at 117–233 folds into the DOMON domain; that stretch reads DDFRILWQII…DTMRLLYMYH (117 aa). 3 disulfides stabilise this stretch: C339–C367, C467–C581, and C543–C565. The N-linked (GlcNAc...) asparagine glycan is linked to N668. A disordered region spans residues 678–701; the sequence is RCKPKRPLAPPTERTAPPPASDLS. Residues 740 to 760 traverse the membrane as a helical segment; it reads FISCLLWLGASSWWLLLMLRT.

It belongs to the copper type II ascorbate-dependent monooxygenase family.

It is found in the membrane. This Drosophila melanogaster (Fruit fly) protein is MOXD1 homolog 2 (olf413).